Here is a 131-residue protein sequence, read N- to C-terminus: Profilin-1 (131 aa).

Belongs to the profilin family. As to quaternary structure, occurs in many kinds of cells as a complex with monomeric actin in a 1:1 ratio.

The protein localises to the cytoplasm. It localises to the cytoskeleton. Functionally, binds to actin and affects the structure of the cytoskeleton. At high concentrations, profilin prevents the polymerization of actin, whereas it enhances it at low concentrations. By binding to PIP2, it inhibits the formation of IP3 and DG. The sequence is that of Profilin-1 (PRO1) from Ricinus communis (Castor bean).